The chain runs to 63 residues: MECYKCGVSGCHLKITCSAEEKFCYKWRDKISNERWLGCAKTCTEENTWRVYNSCCTTNLCNP.

5 disulfides stabilise this stretch: cysteine 3-cysteine 24, cysteine 6-cysteine 11, cysteine 17-cysteine 39, cysteine 43-cysteine 55, and cysteine 56-cysteine 61. Proline 63 bears the Proline amide mark.

Post-translationally, contains 5 disulfide bonds. As to expression, expressed by the venom gland.

The protein resides in the secreted. In terms of biological role, unknown. In vitro, this toxin activates sperm motility when tested on OF1 male mice. The protein is Actiflagelin of Walterinnesia aegyptia (Desert black snake).